Reading from the N-terminus, the 558-residue chain is Factor VII-activating protease (558 aa).

Positions 1 to 23 (MFVRMLVFRVLLLIALVGKSVIG) are cleaved as a signal peptide. 3 consecutive EGF-like domains span residues 71 to 107 (DDDP…SRCQ), 109 to 146 (AQNK…PDCS), and 148 to 186 (VLPA…KFCE). Cystine bridges form between Cys75–Cys86, Cys80–Cys95, Cys97–Cys106, Cys113–Cys123, Cys118–Cys134, Cys136–Cys145, Cys152–Cys163, Cys157–Cys174, Cys176–Cys185, Cys192–Cys274, Cys213–Cys255, Cys244–Cys269, Cys299–Cys433, Cys345–Cys361, Cys353–Cys422, Cys445–Cys513, Cys475–Cys491, and Cys503–Cys531. The Kringle domain maps to 191–274 (DCYVGDGYSY…KWEYCDVTVC (84 aa)). A Peptidase S1 domain is found at 312–553 (IYGGFKSTAG…FLNWIKTTMH (242 aa)). Catalysis depends on charge relay system residues His360 and Asp409. Catalysis depends on Ser507, which acts as the Charge relay system.

The protein belongs to the peptidase S1 family. As to quaternary structure, heterodimer; disulfide-linked. Heterodimer of a 50 kDa heavy and a 27 kDa light chain linked by a disulfide bond. In terms of processing, proteolytic cleavage at Gly-23 or Met-27 can give rise to the 50 kDa heavy chain (HC) and cleavage at Arg-311 or Lys-317 can give rise to the 27 kDa light chain (LC). The HC can undergo further proteolytic cleavage giving rise to a 26 kDa fragment. The LC can undergo further proteolytic cleavage at Arg-311 leading to a 17-kDa fragment and at Arg-478 leading to a 8-kDa fragment. In terms of tissue distribution, liver and kidney.

The protein localises to the secreted. Cleaves the alpha-chain at multiple sites and the beta-chain between 'Lys-53' and 'Lys-54' but not the gamma-chain of fibrinogen and therefore does not initiate the formation of the fibrin clot and does not cause the fibrinolysis directly. It does not cleave (activate) prothrombin and plasminogen but converts the inactive single chain urinary plasminogen activator (pro-urokinase) to the active two chain form. Activates coagulation factor VII. May function as a tumor suppressor negatively regulating cell proliferation and cell migration. The polypeptide is Factor VII-activating protease (Mus musculus (Mouse)).